A 77-amino-acid polypeptide reads, in one-letter code: MGSFSIWHWLIVLVIVMLVFGTKKLRNIGQDLGGAVKGFKDGMKEGNTDEPATPTPAKELRDSTTIDVEAKEKSRQQ.

The chain crosses the membrane as a helical span at residues 1–21 (MGSFSIWHWLIVLVIVMLVFG). The segment at 40-77 (KDGMKEGNTDEPATPTPAKELRDSTTIDVEAKEKSRQQ) is disordered. The segment covering 58-77 (KELRDSTTIDVEAKEKSRQQ) has biased composition (basic and acidic residues).

The protein belongs to the TatA/E family. As to quaternary structure, the Tat system comprises two distinct complexes: a TatABC complex, containing multiple copies of TatA, TatB and TatC subunits, and a separate TatA complex, containing only TatA subunits. Substrates initially bind to the TatABC complex, which probably triggers association of the separate TatA complex to form the active translocon.

It is found in the cell inner membrane. In terms of biological role, part of the twin-arginine translocation (Tat) system that transports large folded proteins containing a characteristic twin-arginine motif in their signal peptide across membranes. TatA could form the protein-conducting channel of the Tat system. This chain is Sec-independent protein translocase protein TatA, found in Cupriavidus metallidurans (strain ATCC 43123 / DSM 2839 / NBRC 102507 / CH34) (Ralstonia metallidurans).